The sequence spans 117 residues: Large ribosomal subunit protein uL18 (117 aa).

Belongs to the universal ribosomal protein uL18 family. In terms of assembly, part of the 50S ribosomal subunit; part of the 5S rRNA/L5/L18/L25 subcomplex. Contacts the 5S and 23S rRNAs.

This is one of the proteins that bind and probably mediate the attachment of the 5S RNA into the large ribosomal subunit, where it forms part of the central protuberance. This Azoarcus sp. (strain BH72) protein is Large ribosomal subunit protein uL18.